The chain runs to 451 residues: Zinc finger MYND domain-containing protein 10 homolog (451 aa).

8 residues coordinate Zn(2+): cysteine 412, cysteine 415, cysteine 423, cysteine 426, cysteine 432, cysteine 436, histidine 444, and cysteine 448. An MYND-type zinc finger spans residues 412 to 448 (CATCQAKAKKKCACCKKVHYCSRDCQLKDWPQHKLVC).

Belongs to the ZMYND10 family. As to expression, specifically expressed in cells with flagella and motile cilia: chordotonal sensory neurons and sperm.

It is found in the cytoplasm. It localises to the cell projection. The protein resides in the cilium. The protein localises to the dynein axonemal particle. Its function is as follows. Plays a role in axonemal structure organization and motility. May be involved in axonemal pre-assembly of inner and outer dynein arms (IDA and ODA, respectively) for proper axoneme building for cilia motility. This chain is Zinc finger MYND domain-containing protein 10 homolog, found in Drosophila melanogaster (Fruit fly).